The primary structure comprises 1768 residues: Maestro heat-like repeat-containing protein family member 1 homolog (1768 aa).

HEAT repeat units lie at residues 4-47, 164-203, 816-856, 1166-1204, 1483-1521, and 1731-1768; these read TSQV…HQPN, VHNPFGLVPFLTDILSRTVPLLQHVKTDPLRCAWARAICS, QRLQ…AVHP, QSQMQIYLSAIFEMLTDRQSHVSSAAAQLLTYAVMARGA, EQLLVKCIRRLEDSLTDPSLRIRKLCVKGLGELSECSST, and TISRELVFTGLVALLKDSEDVNVRISATRAIANLHDFH.

This sequence belongs to the MROH1 family. In terms of assembly, homooligomer; homooligomerizes at lysosome scission sites.

It localises to the lysosome membrane. Functionally, lysosome fission factor. Recruited to lysosomes by rab-7 at scission sites and homooligomerizes to mediate the constriction and scission of lysosomal tubules. May sever membranes by inserting amphipathic helices into one bilayer leaflet. Lysosome fission is required to maintain their steady-state number, shape, size, composition and function, and to accomplish regeneration. The chain is Maestro heat-like repeat-containing protein family member 1 homolog from Caenorhabditis elegans.